The sequence spans 406 residues: COP9 signalosome complex subunit 4 (406 aa).

An N-acetylalanine modification is found at Ala-2. Lys-25 carries the post-translational modification N6-acetyllysine. The region spanning 197–366 (YRRKFIEAAQ…GIVHFETREA (170 aa)) is the PCI domain.

Belongs to the CSN4 family. As to quaternary structure, component of the CSN complex, composed of COPS1/GPS1, COPS2, COPS3, COPS4, COPS5, COPS6, COPS7 (COPS7A or COPS7B), COPS8 and COPS9 isoform 1. In the complex, it probably interacts directly with COPS1, COPS2, COPS3, COPS5, COPS6, COPS7 (COPS7A or COPS7B) and COPS8. Interacts with TOR1A; the interaction is direct and associates TOR1A and SNAPIN with the CSN complex. Interacts with STON2; controls STON2 neddylation levels. Interacts with ERCC6.

The protein resides in the cytoplasm. The protein localises to the nucleus. It is found in the cytoplasmic vesicle. It localises to the secretory vesicle. Its subcellular location is the synaptic vesicle. Component of the COP9 signalosome complex (CSN), a complex involved in various cellular and developmental processes. The CSN complex is an essential regulator of the ubiquitin (Ubl) conjugation pathway by mediating the deneddylation of the cullin subunits of SCF-type E3 ligase complexes, leading to decrease the Ubl ligase activity of SCF-type complexes such as SCF, CSA or DDB2. Also involved in the deneddylation of non-cullin subunits such as STON2. The complex is also involved in phosphorylation of p53/TP53, c-jun/JUN, IkappaBalpha/NFKBIA, ITPK1, IRF8/ICSBP and SNAPIN, possibly via its association with CK2 and PKD kinases. CSN-dependent phosphorylation of TP53 and JUN promotes and protects degradation by the Ubl system, respectively. In Homo sapiens (Human), this protein is COP9 signalosome complex subunit 4 (COPS4).